Here is a 157-residue protein sequence, read N- to C-terminus: Increased recombination centers protein 23 (157 aa).

The Cytoplasmic segment spans residues 1–6 (MIEALE). Residues 7-29 (IVLLLVIQSLQYICRTCIAFLLI) traverse the membrane as a helical segment. Topologically, residues 30–33 (PFLG) are lumenal. The chain crosses the membrane as a helical span at residues 34 to 56 (LYAFDLFLYVYRMILYLSQMFNY). At 57 to 157 (KRKLGRSKTN…EEGYYIAGSI (101 aa)) the chain is on the cytoplasmic side.

It is found in the endoplasmic reticulum membrane. In terms of biological role, is probably involved in a pathway contributing to genomic integrity. This chain is Increased recombination centers protein 23 (IRC23), found in Saccharomyces cerevisiae (strain ATCC 204508 / S288c) (Baker's yeast).